The following is a 354-amino-acid chain: Glycerol-1-phosphate dehydrogenase [NAD(P)+] (354 aa).

Residues 102–106 and 124–127 each bind NAD(+); these read GRSID and TAAS. Position 129 (Asp129) interacts with substrate. Ser133 contributes to the NAD(+) binding site. Asp176 is a substrate binding site. Asp176 and His256 together coordinate Zn(2+). His260 provides a ligand contact to substrate. His272 is a binding site for Zn(2+).

Belongs to the glycerol-1-phosphate dehydrogenase family. Zn(2+) serves as cofactor.

The protein localises to the cytoplasm. It carries out the reaction sn-glycerol 1-phosphate + NAD(+) = dihydroxyacetone phosphate + NADH + H(+). The catalysed reaction is sn-glycerol 1-phosphate + NADP(+) = dihydroxyacetone phosphate + NADPH + H(+). Its pathway is membrane lipid metabolism; glycerophospholipid metabolism. In terms of biological role, catalyzes the NAD(P)H-dependent reduction of dihydroxyacetonephosphate (DHAP or glycerone phosphate) to glycerol 1-phosphate (G1P). The G1P thus generated is used as the glycerophosphate backbone of phospholipids in the cellular membranes of Archaea. This Methanothrix thermoacetophila (strain DSM 6194 / JCM 14653 / NBRC 101360 / PT) (Methanosaeta thermophila) protein is Glycerol-1-phosphate dehydrogenase [NAD(P)+].